The chain runs to 175 residues: Ribulose bisphosphate carboxylase small subunit, chloroplastic (175 aa).

The N-terminal 34 residues, M1 to R34, are a transit peptide targeting the chloroplast.

Belongs to the RuBisCO small chain family. Heterohexadecamer of 8 large and 8 small subunits.

Its subcellular location is the plastid. The protein resides in the chloroplast. RuBisCO catalyzes two reactions: the carboxylation of D-ribulose 1,5-bisphosphate, the primary event in carbon dioxide fixation, as well as the oxidative fragmentation of the pentose substrate. Both reactions occur simultaneously and in competition at the same active site. Although the small subunit is not catalytic it is essential for maximal activity. The sequence is that of Ribulose bisphosphate carboxylase small subunit, chloroplastic from Batophora oerstedii (Green alga).